The sequence spans 254 residues: Type III pantothenate kinase 2 (254 aa).

6-13 (DMGNSHIH) contacts ATP. 107–110 (GADR) is a binding site for substrate. Asp109 acts as the Proton acceptor in catalysis. Asp130 lines the K(+) pocket. Residue Thr133 coordinates ATP. Thr185 contributes to the substrate binding site.

Belongs to the type III pantothenate kinase family. Homodimer. The cofactor is NH4(+). K(+) is required as a cofactor.

The protein resides in the cytoplasm. The enzyme catalyses (R)-pantothenate + ATP = (R)-4'-phosphopantothenate + ADP + H(+). The protein operates within cofactor biosynthesis; coenzyme A biosynthesis; CoA from (R)-pantothenate: step 1/5. Functionally, catalyzes the phosphorylation of pantothenate (Pan), the first step in CoA biosynthesis. This chain is Type III pantothenate kinase 2, found in Francisella tularensis subsp. holarctica (strain LVS).